The sequence spans 639 residues: Chaperone protein DnaK (639 aa).

At Thr-198 the chain carries Phosphothreonine; by autocatalysis. A disordered region spans residues 604-639 (KSQAQGGDNADAGKQANAAADDVVDAEFEEVKDDKK). Over residues 606–624 (QAQGGDNADAGKQANAAAD) the composition is skewed to low complexity. Residues 625-639 (DVVDAEFEEVKDDKK) show a composition bias toward acidic residues.

It belongs to the heat shock protein 70 family.

In terms of biological role, acts as a chaperone. The sequence is that of Chaperone protein DnaK from Shewanella baltica (strain OS223).